We begin with the raw amino-acid sequence, 244 residues long: 1-(5-phosphoribosyl)-5-[(5-phosphoribosylamino)methylideneamino] imidazole-4-carboxamide isomerase (244 aa).

The Proton acceptor role is filled by aspartate 10. Aspartate 132 serves as the catalytic Proton donor.

This sequence belongs to the HisA/HisF family.

The protein resides in the cytoplasm. The enzyme catalyses 1-(5-phospho-beta-D-ribosyl)-5-[(5-phospho-beta-D-ribosylamino)methylideneamino]imidazole-4-carboxamide = 5-[(5-phospho-1-deoxy-D-ribulos-1-ylimino)methylamino]-1-(5-phospho-beta-D-ribosyl)imidazole-4-carboxamide. It functions in the pathway amino-acid biosynthesis; L-histidine biosynthesis; L-histidine from 5-phospho-alpha-D-ribose 1-diphosphate: step 4/9. The sequence is that of 1-(5-phosphoribosyl)-5-[(5-phosphoribosylamino)methylideneamino] imidazole-4-carboxamide isomerase from Stenotrophomonas maltophilia (strain R551-3).